A 406-amino-acid chain; its full sequence is Homocysteine-responsive endoplasmic reticulum-resident ubiquitin-like domain member 2 protein (406 aa).

The Ubiquitin-like domain maps to 10 to 89; it reads VTLIIKAPNQ…HMVHLVCTSR (80 aa). Positions 86–154 are disordered; that stretch reads CTSRTPPSSP…TLPQAQTDQA (69 aa). Composition is skewed to low complexity over residues 87 to 98 and 106 to 126; these read TSRTPPSSPKSS and ALAS…PSSG. The segment covering 127–154 has biased composition (polar residues); the sequence is QETLSLAVGSSSEGLRQRTLPQAQTDQA. Residues 302–322 traverse the membrane as a helical segment; it reads FIMVMGAMLLVYLHQAGWFPF.

The protein resides in the membrane. Its function is as follows. Could be involved in the unfolded protein response (UPR) pathway. This chain is Homocysteine-responsive endoplasmic reticulum-resident ubiquitin-like domain member 2 protein (HERPUD2), found in Homo sapiens (Human).